Here is a 64-residue protein sequence, read N- to C-terminus: Prokaryotic ubiquitin-like protein Pup (64 aa).

Residues 20–58 (QELTLAASHVVSDVSEVDDLLDEIDGLLAENAEDFVTGF) form an ARC ATPase binding region. Glu-64 participates in a covalent cross-link: Isoglutamyl lysine isopeptide (Glu-Lys) (interchain with K-? in acceptor proteins).

This sequence belongs to the prokaryotic ubiquitin-like protein family. In terms of assembly, strongly interacts with the proteasome-associated ATPase ARC through a hydrophobic interface; the interacting region of Pup lies in its C-terminal half. There is one Pup binding site per ARC hexamer ring.

The protein operates within protein degradation; proteasomal Pup-dependent pathway. Protein modifier that is covalently attached to lysine residues of substrate proteins, thereby targeting them for proteasomal degradation. The tagging system is termed pupylation. This is Prokaryotic ubiquitin-like protein Pup from Rothia mucilaginosa (strain DY-18) (Stomatococcus mucilaginosus).